The sequence spans 383 residues: Probable protein phosphatase 2C 13 (383 aa).

The PPM-type phosphatase domain maps to 78-349 (RSGSFADIRS…DNMTVIVICF (272 aa)). Residues Asp121, Gly122, Asp297, and Asp340 each coordinate Mn(2+).

This sequence belongs to the PP2C family. Requires Mg(2+) as cofactor. Mn(2+) serves as cofactor.

It carries out the reaction O-phospho-L-seryl-[protein] + H2O = L-seryl-[protein] + phosphate. The catalysed reaction is O-phospho-L-threonyl-[protein] + H2O = L-threonyl-[protein] + phosphate. The sequence is that of Probable protein phosphatase 2C 13 from Arabidopsis thaliana (Mouse-ear cress).